The primary structure comprises 341 residues: Phenylalanine--tRNA ligase alpha subunit (341 aa).

Residue Glu256 coordinates Mg(2+).

The protein belongs to the class-II aminoacyl-tRNA synthetase family. Phe-tRNA synthetase alpha subunit type 1 subfamily. As to quaternary structure, tetramer of two alpha and two beta subunits. The cofactor is Mg(2+).

The protein localises to the cytoplasm. It carries out the reaction tRNA(Phe) + L-phenylalanine + ATP = L-phenylalanyl-tRNA(Phe) + AMP + diphosphate + H(+). The sequence is that of Phenylalanine--tRNA ligase alpha subunit from Leptospira biflexa serovar Patoc (strain Patoc 1 / Ames).